Reading from the N-terminus, the 386-residue chain is NADH-ubiquinone oxidoreductase 49 kDa subunit homolog (386 aa).

The protein belongs to the complex I 49 kDa subunit family.

It is found in the mitochondrion. It catalyses the reaction a ubiquinone + NADH + 5 H(+)(in) = a ubiquinol + NAD(+) + 4 H(+)(out). Functionally, core subunit of the mitochondrial membrane respiratory chain NADH dehydrogenase (Complex I) that is believed to belong to the minimal assembly required for catalysis. Complex I functions in the transfer of electrons from NADH to the respiratory chain. The immediate electron acceptor for the enzyme is believed to be ubiquinone. Component of the iron-sulfur (IP) fragment of the enzyme. Component of the iron-sulfur (IP) fragment of the enzyme. In Trypanosoma brucei brucei, this protein is NADH-ubiquinone oxidoreductase 49 kDa subunit homolog (NAD7).